Here is a 1220-residue protein sequence, read N- to C-terminus: Formin-F (1220 aa).

Positions 1-10 (MNRIFGRKKK) are enriched in basic residues. Residues 1–62 (MNRIFGRKKK…TNSKSADKFD (62 aa)) form a disordered region. Residues 6–373 (GRKKKDKDSD…QISVNKPMIG (368 aa)) form the GBD/FH3 domain. The segment covering 11–20 (DKDSDEKGST) has biased composition (basic and acidic residues). Polar residues predominate over residues 41–56 (AYSSLQPDGNNSTNSK). Residues 392 to 428 (VALQSEFQKNIEELAKVKDQLKKANFDLNIANQELSS) adopt a coiled-coil conformation. Disordered stretches follow at residues 461–659 (IDSN…KFTV), 711–732 (SQKKLEASDKKSTSSTKPGTVS), and 1049–1192 (DEAK…KKDI). Composition is skewed to low complexity over residues 501–518 (SKPPLNPKSSKPPISSSQ) and 525–554 (SNLSSSSSDSLSNDFKSQVEVAQQQQPQQQ). In terms of domain architecture, FH1 spans 532-655 (SDSLSNDFKS…NSNKPPANAP (124 aa)). The span at 555-564 (NIESTLTPEP) shows a compositional bias: polar residues. Residues 575 to 638 (TTPPPAPPAP…GKGGPPPPPG (64 aa)) show a composition bias toward pro residues. The region spanning 656–1054 (KFTVSKPTTK…AIKRDEAKAK (399 aa)) is the FH2 domain. The segment covering 711 to 722 (SQKKLEASDKKS) has biased composition (basic and acidic residues). A coiled-coil region spans residues 1032–1062 (YKDFQRDKEAAERAIKRDEAKAKKAQQLKRM). Positions 1066 to 1083 (IASSTNNKNPLASSSTSV) are enriched in polar residues. One can recognise a DAD domain in the interval 1083–1158 (VGDGGMVEDI…TPSKSGSRRE (76 aa)). The segment covering 1117–1142 (DSSSITTISEQSENSNTSSITITTPS) has biased composition (low complexity). A compositionally biased stretch (basic and acidic residues) spans 1161–1192 (TSKSSDKDKEKEKEKEKQCESTESEDINKKDI).

The protein belongs to the formin homology family. Diaphanous subfamily. As to quaternary structure, interacts (via GBD/FH3 domain) with activated Rho-GTPases.

Functionally, formins play an important role in the nucleation of actin and the formation of linear actin filaments. This chain is Formin-F (forF), found in Dictyostelium discoideum (Social amoeba).